The primary structure comprises 190 residues: MPRANEIKKGMVLNYNGKLLLAKDIDIQSPTARGAATLYKMRFSDVRTGLKVEERFKGDDIVDTVTLTRRYVDFSYVDGNEYVFMDKEDYTPYTFTKDQIEEELLFMPEGGMPDMQVLTWDGQLLALELPQTVDLEIVETAPGIKGASASARNKPATLSTGLVIQVPEYLSPGEKIRIHIEERRYMGRAD.

The protein belongs to the elongation factor P family.

The chain is Elongation factor P-like protein from Shigella boydii serotype 4 (strain Sb227).